We begin with the raw amino-acid sequence, 334 residues long: N-acetyl-gamma-glutamyl-phosphate reductase (334 aa).

The active site involves C154.

It belongs to the NAGSA dehydrogenase family. Type 1 subfamily.

It localises to the cytoplasm. The enzyme catalyses N-acetyl-L-glutamate 5-semialdehyde + phosphate + NADP(+) = N-acetyl-L-glutamyl 5-phosphate + NADPH + H(+). It participates in amino-acid biosynthesis; L-arginine biosynthesis; N(2)-acetyl-L-ornithine from L-glutamate: step 3/4. In terms of biological role, catalyzes the NADPH-dependent reduction of N-acetyl-5-glutamyl phosphate to yield N-acetyl-L-glutamate 5-semialdehyde. The polypeptide is N-acetyl-gamma-glutamyl-phosphate reductase (Escherichia coli (strain K12)).